We begin with the raw amino-acid sequence, 968 residues long: RNA polymerase-associated protein RapA (968 aa).

Residues 164-334 enclose the Helicase ATP-binding domain; it reads DVGRRHAPRV…FARLRLLDPN (171 aa). 177–184 serves as a coordination point for ATP; that stretch reads DEVGLGKT. The DEAH box signature appears at 280–283; sequence DEAH. The 196-residue stretch at 490–685 folds into the Helicase C-terminal domain; it reads RVEWLMGYLT…ALKAQLEQGR (196 aa).

It belongs to the SNF2/RAD54 helicase family. RapA subfamily. As to quaternary structure, interacts with the RNAP. Has a higher affinity for the core RNAP than for the holoenzyme. Its ATPase activity is stimulated by binding to RNAP.

Transcription regulator that activates transcription by stimulating RNA polymerase (RNAP) recycling in case of stress conditions such as supercoiled DNA or high salt concentrations. Probably acts by releasing the RNAP, when it is trapped or immobilized on tightly supercoiled DNA. Does not activate transcription on linear DNA. Probably not involved in DNA repair. The chain is RNA polymerase-associated protein RapA from Salmonella typhi.